Here is a 561-residue protein sequence, read N- to C-terminus: Type 2 DNA topoisomerase 6 subunit B (561 aa).

Residues Asn-46, Asp-78, 99 to 100, 109 to 116, and Lys-471 contribute to the ATP site; these read TK and GQQGIGIS.

This sequence belongs to the TOP6B family. Homodimer. Heterotetramer of two Top6A and two Top6B chains.

It carries out the reaction ATP-dependent breakage, passage and rejoining of double-stranded DNA.. Functionally, relaxes both positive and negative superturns and exhibits a strong decatenase activity. The sequence is that of Type 2 DNA topoisomerase 6 subunit B from Thermococcus gammatolerans (strain DSM 15229 / JCM 11827 / EJ3).